The primary structure comprises 145 residues: Large ribosomal subunit protein uL15 (145 aa).

The disordered stretch occupies residues 1–52 (MKLNTIAPAEGSKKDRRRVGRGIGSGFGKTAGRGHKGQHARSGGYHKVGFEG). Residues 21–31 (RGIGSGFGKTA) show a composition bias toward gly residues.

Belongs to the universal ribosomal protein uL15 family. As to quaternary structure, part of the 50S ribosomal subunit.

In terms of biological role, binds to the 23S rRNA. This is Large ribosomal subunit protein uL15 from Acidithiobacillus ferrooxidans (strain ATCC 53993 / BNL-5-31) (Leptospirillum ferrooxidans (ATCC 53993)).